Reading from the N-terminus, the 274-residue chain is Penicillin-insensitive murein endopeptidase (274 aa).

Residues 1-19 form the signal peptide; the sequence is MKKTVIALLAWFVSSASLA. Intrachain disulfides connect C44/C265, C187/C235, and C216/C223. Positions 110, 113, 120, 147, 150, and 211 each coordinate Zn(2+). The segment at 225–274 is disordered; sequence DQPLPPPGDGCGAELQSWFEPPKPGTTKPEKKTPPPLPPSCQALLDEHVL.

Belongs to the peptidase M74 family. Dimer. Requires Zn(2+) as cofactor.

It is found in the periplasm. In terms of biological role, murein endopeptidase that cleaves the D-alanyl-meso-2,6-diamino-pimelyl amide bond that connects peptidoglycan strands. Likely plays a role in the removal of murein from the sacculus. The chain is Penicillin-insensitive murein endopeptidase from Salmonella paratyphi C (strain RKS4594).